Here is a 478-residue protein sequence, read N- to C-terminus: Zinc finger protein 410 (478 aa).

Disordered regions lie at residues 84 to 113 (PDGE…LQDL) and 187 to 214 (NAKT…PLPQ). A compositionally biased stretch (polar residues) spans 103-113 (TPESPSLLQDL). C2H2-type zinc fingers lie at residues 219–243 (LKCT…LKTH), 249–273 (FICP…MRTH), 279–303 (FMCH…RRIH), 309–333 (FLCE…LVVH), and 339–362 (HQCQ…RKHH). 20 residues coordinate Zn(2+): C221, C226, H239, H243, C251, C256, H269, H273, C281, C286, H299, H303, C311, C316, H329, H333, C341, C344, H357, and H361.

In terms of assembly, interacts with CDKN2A/p14ARF. In terms of processing, O-glycosylated. O-GlcNAcylation may occur in response to increasing glucose levels and affect transcription factor activity. Sumoylated. Sumoylation increases its half-life, possibly by blocking ubiquitin-mediated degradation.

The protein localises to the nucleus. It is found in the chromosome. Transcription factor that binds to the sequence motif 5'-CATCCCATAATA-3', and is specifically required to silence expression of fetal hemoglobin in adult erythroid cells. Prevents expression of fetal hemoglobin genes HBG1 and HBG2 through CHD4: acts as a direct transcriptional activator of CHD4, a central component of the NuRD complex that represses transcription of fetal hemoglobin genes HBG1 and HBG2 in erythroid cells. May also activate transcription of matrix-remodeling genes such as MMP1 during fibroblast senescence. May activate transcription of the gap junction gene GJC1, perhaps in response to increasing glucose. However, recent studies suggest that ZNF410 is dedicated to regulate expression of a single gene: CHD4. This is Zinc finger protein 410 from Mus musculus (Mouse).